Consider the following 547-residue polypeptide: Chaperonin GroEL (547 aa).

Residues 29–32 (TLGP), 86–90 (DGTTT), Gly-413, 479–481 (NAA), and Asp-495 contribute to the ATP site.

The protein belongs to the chaperonin (HSP60) family. Forms a cylinder of 14 subunits composed of two heptameric rings stacked back-to-back. Interacts with the co-chaperonin GroES.

Its subcellular location is the cytoplasm. It catalyses the reaction ATP + H2O + a folded polypeptide = ADP + phosphate + an unfolded polypeptide.. In terms of biological role, together with its co-chaperonin GroES, plays an essential role in assisting protein folding. The GroEL-GroES system forms a nano-cage that allows encapsulation of the non-native substrate proteins and provides a physical environment optimized to promote and accelerate protein folding. The chain is Chaperonin GroEL from Synechococcus sp. (strain RCC307).